The following is a 1190-amino-acid chain: Phosphatidylinositol-3,5-bisphosphate 3-phosphatase MTMR4 (1190 aa).

Ser-8 carries the post-translational modification Phosphoserine. One can recognise a Myotubularin phosphatase domain in the interval 153–570 (EHIRCRQEAE…RALHLWTAVY (418 aa)). Residues Asn-320, Asn-345, and Ile-346 each contribute to the a 1,2-diacyl-sn-glycero-3-phospho-(1D-myo-inositol-3,5-bisphosphate) site. A 1,2-diacyl-sn-glycero-3-phospho-(1D-myo-inositol-3-phosphate)-binding residues include Asn-320, Asn-345, and Ile-346. The active-site Phosphocysteine intermediate is the Cys-407. A 1,2-diacyl-sn-glycero-3-phospho-(1D-myo-inositol-3,5-bisphosphate) contacts are provided by Ser-408, Asp-409, Gly-410, Trp-411, Asp-412, Arg-413, Lys-449, and Arg-453. Residues Ser-408, Asp-409, Gly-410, Trp-411, Asp-412, and Arg-413 each contribute to the a 1,2-diacyl-sn-glycero-3-phospho-(1D-myo-inositol-3-phosphate) site. Arg-453 is an a 1,2-diacyl-sn-glycero-3-phospho-(1D-myo-inositol-3-phosphate) binding site. 2 positions are modified to phosphoserine: Ser-610 and Ser-629. 3 disordered regions span residues 616 to 694 (SACD…FKGH), 724 to 749 (ETEA…GKPP), and 773 to 848 (DFPE…PSSV). Over residues 618-637 (CDTSSPLTRTSSDPNLNNHS) the composition is skewed to polar residues. The segment covering 782–847 (LTGTPQQPHL…SISHQEQPSS (66 aa)) has biased composition (polar residues). The PY-motif; substrate motif for NEDD4 signature appears at 999 to 1003 (VPPLY). Residues 1020 to 1052 (LRQIEAGYRQEVEQLRRQVRELQMRLDIRHCCA) adopt a coiled-coil conformation. The segment at 1109 to 1169 (DHMASHCFNC…VCNSCYEHIQ (61 aa)) adopts an FYVE-type zinc-finger fold. Cys-1115, Cys-1118, Cys-1131, Cys-1134, Cys-1139, Cys-1142, Cys-1161, and Cys-1164 together coordinate Zn(2+).

Belongs to the protein-tyrosine phosphatase family. Non-receptor class myotubularin subfamily. Homooligomeric. Forms MTMR3:MTMR4 heterooligomers; regulates the localization of both proteins. The MTMR3:MTMR4 heterooligomer can also recruit both CEP55 and PLK1; occurs during early mitosis, regulates the phosphorylation of CEP55 by PLK1 and its recruitment to the midbody where it can mediate cell abscission. Interacts with SMAD2 and SMAD3; negatively regulates TGF-beta signaling through SMAD2 and SMAD3 dephosphorylation and retention in endosomes. Interacts with SMAD1; negatively regulates BMP signaling through SMAD1 dephosphorylation and retention in endosomes. In terms of processing, ubiquitinated. Ubiquitination by NEDD4 probably leads to proteasomal degradation. Post-translationally, phosphorylated by CDK1 during mitosis.

Its subcellular location is the early endosome membrane. It localises to the recycling endosome membrane. It is found in the late endosome membrane. The protein localises to the cytoplasmic vesicle. The protein resides in the phagosome membrane. The catalysed reaction is a 1,2-diacyl-sn-glycero-3-phospho-(1D-myo-inositol-3-phosphate) + H2O = a 1,2-diacyl-sn-glycero-3-phospho-(1D-myo-inositol) + phosphate. The enzyme catalyses a 1,2-diacyl-sn-glycero-3-phospho-(1D-myo-inositol-3,5-bisphosphate) + H2O = a 1,2-diacyl-sn-glycero-3-phospho-(1D-myo-inositol-5-phosphate) + phosphate. It carries out the reaction 1,2-dioctanoyl-sn-glycero-3-phospho-(1-D-myo-inositol-3-phosphate) + H2O = 1,2-dioctanoyl-sn-glycero-3-phospho-(1D-myo-inositol) + phosphate. It catalyses the reaction 1,2-dioctanoyl-sn-glycero-3-phospho-(1D-myo-inositol-3,5-bisphosphate) + H2O = 1,2-dioctanoyl-sn-glycero-3-phospho-(1D-myo-inositol-5-phosphate) + phosphate. Functionally, lipid phosphatase that specifically dephosphorylates the D-3 position of phosphatidylinositol 3-phosphate and phosphatidylinositol 3,5-bisphosphate, generating phosphatidylinositol and phosphatidylinositol 5-phosphate. Decreases the levels of phosphatidylinositol 3-phosphate, a phospholipid found in cell membranes where it acts as key regulator of both cell signaling and intracellular membrane traffic, in a subset of endosomal membranes to negatively regulate both endocytic recycling and trafficking and/or maturation of endosomes toward lysosomes. Through phosphatidylinositol 3-phosphate turnover in phagosome membranes regulates phagocytosis and phagosome maturation. By decreasing phosphatidylinositol 3-monophosphate (PI3P) levels in immune cells it can also regulate the innate immune response. Beside its lipid phosphatase activity, can also function as a molecular adapter to regulate midbody abscission during mitotic cytokinesis. Can also negatively regulate TGF-beta and BMP signaling through Smad proteins dephosphorylation and retention in endosomes. This chain is Phosphatidylinositol-3,5-bisphosphate 3-phosphatase MTMR4, found in Mus musculus (Mouse).